Here is a 952-residue protein sequence, read N- to C-terminus: MSSSSYNPYKNNVNDRLINNSTDSFQDNDQGIPNNNDTFLSRIFGLNSIYNQLQDNYQYYDPEFDSSLNQQLQQSIQENDEAEDESLLPQHQQQQQQAAPMDLSIQDKSAKQKSKSSSLLNSDSDSDLSSSEDSYVRPNIPQIPSTPIETENQGSSSKIKFSIPQRAKNFVGKLHPHHEPTLPVYQTPQEFRRNLPQQQRASATVNTNYQRTRNNNRRFIIPPKERALYLWANITNMDEFLSDVYYYYRGRGLLNIVLSRGFDLIILIFILIFTVFLKWGIDYSIFFDNLHQEESKHITLNDMIIPNYFATIPLSIKFILFGFSVYILLRSVQLYLDYNYKLKELKNFYHYLLDVTDDELMTISWKTIVEKLMLLKDYNSLTSTTKSNNFSENHYVNDLSSKVRLNAHDIANRIMRRENYMIALINKDILDLSVLFMNEKSLLTKTLEWNLKLCIDNFIYNQQGQINGKILKEYNRNQLARELTSRFKLAAIINLILSPFIVIYFVLLYFFRYFNEYKSNPASILGLRQYTPYAEWKLREYNELSHLFNKRLIMSMGPANTYIDQFPKGFLVVNLMRLINFISGSILAVLVIMGILLEDENHSFWSFEITDGRSALFYISIFGTIWAITASSATGTSHESTISTTSQSSNSNSNSNAASTFVYDPEASLRYVAQFTHYLPSSWNKKLHTIQVKNEFCQLYCLKIIIIINEILSSVLTPFILWFKISHNSGNIIDFYREYSIHVDGLGYVCYFAMFNFEEKDKNMMSDLNKSKKRRKRMKNKMNKYGKTKMVNPISGKTVNSEIEMTKISKSESERSSDDESGNEQDYDNDEELDYLSYKKDDKMIKSYMYFLESYGGSKQPQPQPPQQQQHPQNQNQTVGGLRNRNPIQSIDPAIMTGNYYDQQSLNSSIYNINYKFDDSGLLQDETMNSSSRKKGGVLGMLNQFYKQDINR.

2 disordered regions span residues 1–33 (MSSSSYNPYKNNVNDRLINNSTDSFQDNDQGIP) and 69–159 (NQQL…SSKI). The Cytoplasmic segment spans residues 1-260 (MSSSSYNPYK…RGLLNIVLSR (260 aa)). The segment covering 115–133 (KSSSLLNSDSDSDLSSSED) has biased composition (low complexity). Over residues 142–159 (QIPSTPIETENQGSSSKI) the composition is skewed to polar residues. The helical transmembrane segment at 261–281 (GFDLIILIFILIFTVFLKWGI) threads the bilayer. Residues 282–308 (DYSIFFDNLHQEESKHITLNDMIIPNY) lie on the Lumenal side of the membrane. A helical membrane pass occupies residues 309-329 (FATIPLSIKFILFGFSVYILL). Topologically, residues 330 to 490 (RSVQLYLDYN…RELTSRFKLA (161 aa)) are cytoplasmic. Residues 491 to 511 (AIINLILSPFIVIYFVLLYFF) lie within the membrane without spanning it. The Cytoplasmic portion of the chain corresponds to 512-577 (RYFNEYKSNP…KGFLVVNLMR (66 aa)). The chain crosses the membrane as a helical span at residues 578-598 (LINFISGSILAVLVIMGILLE). Residues 599 to 614 (DENHSFWSFEITDGRS) lie on the Lumenal side of the membrane. Residues 615-635 (ALFYISIFGTIWAITASSATG) form a helical membrane-spanning segment. At 636 to 702 (TSHESTISTT…KNEFCQLYCL (67 aa)) the chain is on the cytoplasmic side. An intramembrane segment occupies 703–723 (KIIIIINEILSSVLTPFILWF). Residues 724-952 (KISHNSGNII…NQFYKQDINR (229 aa)) are Cytoplasmic-facing. The segment covering 806 to 818 (TKISKSESERSSD) has biased composition (basic and acidic residues). Disordered stretches follow at residues 806-832 (TKISKSESERSSDDESGNEQDYDNDEE) and 855-889 (YGGSKQPQPQPPQQQQHPQNQNQTVGGLRNRNPIQ). Residues 819–832 (DESGNEQDYDNDEE) show a composition bias toward acidic residues. A compositionally biased stretch (low complexity) spans 867–877 (QQQQHPQNQNQ).

Belongs to the ATG9 family. Homotrimer; forms a homotrimer with a central pore that forms a path between the two membrane leaflets. In terms of processing, phosphorylated by ATG1. ATG1 phosphorylation is required for preautophagosome elongation.

It is found in the preautophagosomal structure membrane. Its subcellular location is the cytoplasmic vesicle membrane. It localises to the golgi apparatus membrane. The protein localises to the endoplasmic reticulum membrane. The catalysed reaction is a 1,2-diacyl-sn-glycero-3-phosphocholine(in) = a 1,2-diacyl-sn-glycero-3-phosphocholine(out). The enzyme catalyses a 1,2-diacyl-sn-glycero-3-phospho-L-serine(in) = a 1,2-diacyl-sn-glycero-3-phospho-L-serine(out). It catalyses the reaction a 1,2-diacyl-sn-glycero-3-phosphoethanolamine(in) = a 1,2-diacyl-sn-glycero-3-phosphoethanolamine(out). It carries out the reaction a 1,2-diacyl-sn-glycero-3-phospho-(1D-myo-inositol-3-phosphate)(in) = a 1,2-diacyl-sn-glycero-3-phospho-(1D-myo-inositol-3-phosphate)(out). In terms of biological role, phospholipid scramblase involved in autophagy and cytoplasm to vacuole transport (Cvt) vesicle formation. Cycles between the preautophagosomal structure/phagophore assembly site (PAS) and the cytoplasmic vesicle pool and supplies membrane for the growing autophagosome. Lipid scramblase activity plays a key role in preautophagosomal structure/phagophore assembly by distributing the phospholipids that arrive through atg2 from the cytoplasmic to the luminal leaflet of the bilayer, thereby driving autophagosomal membrane expansion. Required for mitophagy. Also involved in endoplasmic reticulum-specific autophagic process and is essential for the survival of cells subjected to severe ER stress. Different machineries are required for anterograde trafficking to the PAS during either the Cvt pathway or bulk autophagy and for retrograde trafficking. This Candida albicans (strain SC5314 / ATCC MYA-2876) (Yeast) protein is Autophagy-related protein 9 (ATG9).